Consider the following 156-residue polypeptide: uncharacterized protein (156 aa).

3 helical membrane passes run 42–59 (LLMM…MTTV), 79–98 (ASFL…LLLY), and 105–127 (SLGR…VLGI).

Its subcellular location is the cell membrane. This is an uncharacterized protein from Archaeoglobus fulgidus (strain ATCC 49558 / DSM 4304 / JCM 9628 / NBRC 100126 / VC-16).